The following is a 1063-amino-acid chain: Probable hemoglobin and hemoglobin-haptoglobin-binding protein 1 (1063 aa).

A signal peptide spans 1–24 (MTNFKFSLLACSIAFALNASIAYA). 7 repeat units span residues 26–29 (QPTN), 30–33 (QPTN), 34–37 (QPTN), 38–41 (QPTN), 42–45 (QPTN), 46–49 (QPTN), and 50–53 (QPTN). Positions 26–53 (QPTNQPTNQPTNQPTNQPTNQPTNQPTN) are 7 X 4 AA tandem repeats of Q-P-T-N. Over residues 28-55 (TNQPTNQPTNQPTNQPTNQPTNQPTNQN) the composition is skewed to low complexity. The interval 28-57 (TNQPTNQPTNQPTNQPTNQPTNQPTNQNSN) is disordered. Residues 63–70 (EQINVSGS) carry the TonB box motif. Positions 66–200 (NVSGSSENIN…LGGSVIFETK (135 aa)) constitute a TBDR plug domain. The TBDR beta-barrel domain occupies 208 to 1063 (DKDYYLSYKR…NYRMSVQFEF (856 aa)). The TonB C-terminal box motif lies at 1046–1063 (NRFYAPGRNYRMSVQFEF).

This sequence belongs to the TonB-dependent receptor family. Hemoglobin/haptoglobin binding protein subfamily.

It localises to the cell outer membrane. In terms of biological role, acts as a receptor for hemoglobin or the hemoglobin/haptoglobin complex of the human host and is required for heme uptake. This Haemophilus influenzae (strain ATCC 51907 / DSM 11121 / KW20 / Rd) protein is Probable hemoglobin and hemoglobin-haptoglobin-binding protein 1.